A 468-amino-acid chain; its full sequence is Siroheme synthase (468 aa).

The tract at residues 1 to 202 (MDYLPLFARL…EQHDSAEQWM (202 aa)) is precorrin-2 dehydrogenase /sirohydrochlorin ferrochelatase. NAD(+) contacts are provided by residues 22 to 23 (DI) and 43 to 44 (PS). At Ser-126 the chain carries Phosphoserine. The segment at 214 to 468 (GEIVLVGAGP…SGKEHLINLA (255 aa)) is uroporphyrinogen-III C-methyltransferase. Residue Pro-223 coordinates S-adenosyl-L-methionine. The active-site Proton acceptor is the Asp-246. Catalysis depends on Lys-268, which acts as the Proton donor. Residues 299–301 (GGD), 329–330 (TA), Met-381, and Gly-410 each bind S-adenosyl-L-methionine.

It in the N-terminal section; belongs to the precorrin-2 dehydrogenase / sirohydrochlorin ferrochelatase family. In the C-terminal section; belongs to the precorrin methyltransferase family.

The catalysed reaction is uroporphyrinogen III + 2 S-adenosyl-L-methionine = precorrin-2 + 2 S-adenosyl-L-homocysteine + H(+). It carries out the reaction precorrin-2 + NAD(+) = sirohydrochlorin + NADH + 2 H(+). The enzyme catalyses siroheme + 2 H(+) = sirohydrochlorin + Fe(2+). Its pathway is cofactor biosynthesis; adenosylcobalamin biosynthesis; precorrin-2 from uroporphyrinogen III: step 1/1. It functions in the pathway cofactor biosynthesis; adenosylcobalamin biosynthesis; sirohydrochlorin from precorrin-2: step 1/1. It participates in porphyrin-containing compound metabolism; siroheme biosynthesis; precorrin-2 from uroporphyrinogen III: step 1/1. The protein operates within porphyrin-containing compound metabolism; siroheme biosynthesis; siroheme from sirohydrochlorin: step 1/1. Its pathway is porphyrin-containing compound metabolism; siroheme biosynthesis; sirohydrochlorin from precorrin-2: step 1/1. Multifunctional enzyme that catalyzes the SAM-dependent methylations of uroporphyrinogen III at position C-2 and C-7 to form precorrin-2 via precorrin-1. Then it catalyzes the NAD-dependent ring dehydrogenation of precorrin-2 to yield sirohydrochlorin. Finally, it catalyzes the ferrochelation of sirohydrochlorin to yield siroheme. This Tolumonas auensis (strain DSM 9187 / NBRC 110442 / TA 4) protein is Siroheme synthase.